The sequence spans 554 residues: Aspartyl/glutamyl-tRNA(Asn/Gln) amidotransferase subunit B (554 aa).

Residues 491–554 form a disordered region; that stretch reads AEQPTAPPPE…TPVSHQDAHA (64 aa). Residues 502–540 are compositionally biased toward low complexity; it reads ESAAETPEAPPAVEDAPPEAPTEAITAEAGSAEAITAAS.

It belongs to the GatB/GatE family. GatB subfamily. Heterotrimer of A, B and C subunits.

The enzyme catalyses L-glutamyl-tRNA(Gln) + L-glutamine + ATP + H2O = L-glutaminyl-tRNA(Gln) + L-glutamate + ADP + phosphate + H(+). The catalysed reaction is L-aspartyl-tRNA(Asn) + L-glutamine + ATP + H2O = L-asparaginyl-tRNA(Asn) + L-glutamate + ADP + phosphate + 2 H(+). Functionally, allows the formation of correctly charged Asn-tRNA(Asn) or Gln-tRNA(Gln) through the transamidation of misacylated Asp-tRNA(Asn) or Glu-tRNA(Gln) in organisms which lack either or both of asparaginyl-tRNA or glutaminyl-tRNA synthetases. The reaction takes place in the presence of glutamine and ATP through an activated phospho-Asp-tRNA(Asn) or phospho-Glu-tRNA(Gln). The sequence is that of Aspartyl/glutamyl-tRNA(Asn/Gln) amidotransferase subunit B from Gloeobacter violaceus (strain ATCC 29082 / PCC 7421).